Here is a 197-residue protein sequence, read N- to C-terminus: Protein shisa-4 (197 aa).

Residues 1 to 27 (MPPAGLRRAAPLTAIALLVLGAPLVLA) form the signal peptide. At 28 to 87 (GEDCLWYLDRNGSWHPGFNCEFFTFCCGTCYHRYCCRDLTLLITERQQKHCLAFSPKTIA) the chain is on the extracellular side. Residues 88-108 (GIASAVILFVAVVATTICCFL) form a helical membrane-spanning segment. Residues 109–197 (CSCCYLYRRR…MPPQPSYPGA (89 aa)) lie on the Cytoplasmic side of the membrane.

The protein belongs to the shisa family.

Its subcellular location is the membrane. This Homo sapiens (Human) protein is Protein shisa-4 (SHISA4).